A 305-amino-acid chain; its full sequence is UDP-3-O-acyl-N-acetylglucosamine deacetylase (305 aa).

Zn(2+)-binding residues include His-79, His-238, and Asp-242. His-265 (proton donor) is an active-site residue.

It belongs to the LpxC family. Requires Zn(2+) as cofactor.

The enzyme catalyses a UDP-3-O-[(3R)-3-hydroxyacyl]-N-acetyl-alpha-D-glucosamine + H2O = a UDP-3-O-[(3R)-3-hydroxyacyl]-alpha-D-glucosamine + acetate. It participates in glycolipid biosynthesis; lipid IV(A) biosynthesis; lipid IV(A) from (3R)-3-hydroxytetradecanoyl-[acyl-carrier-protein] and UDP-N-acetyl-alpha-D-glucosamine: step 2/6. In terms of biological role, catalyzes the hydrolysis of UDP-3-O-myristoyl-N-acetylglucosamine to form UDP-3-O-myristoylglucosamine and acetate, the committed step in lipid A biosynthesis. The chain is UDP-3-O-acyl-N-acetylglucosamine deacetylase from Edwardsiella ictaluri (strain 93-146).